Reading from the N-terminus, the 119-residue chain is Single-stranded DNA-binding protein (119 aa).

In terms of domain architecture, SSB spans 3–102 (INIVTLVGRV…IRVDQLELLG (100 aa)).

As to quaternary structure, homotetramer.

The chain is Single-stranded DNA-binding protein (ssb1) from Anabaena variabilis.